A 314-amino-acid polypeptide reads, in one-letter code: Olfactory receptor 5P81 (314 aa).

The Extracellular segment spans residues 1–28 (MAFLEDGNHTVVTEFILLGLTDDPVLRV). The N-linked (GlcNAc...) asparagine glycan is linked to asparagine 8. The chain crosses the membrane as a helical span at residues 29–49 (ILFIIILCIYLVTVSGNLSTI). The Cytoplasmic segment spans residues 50 to 57 (LLIRVSSQ). The helical transmembrane segment at 58 to 78 (LHHPMYFFLSHLASIDIAISS) threads the bilayer. Topologically, residues 79-102 (SVTPNMVVNFLVERSSISYIGCGI) are extracellular. Cysteine 100 and cysteine 192 are oxidised to a cystine. The helical transmembrane segment at 103 to 123 (QLGSAVFFGAIECFLLAVMAY) threads the bilayer. The Cytoplasmic portion of the chain corresponds to 124–136 (DRFVAICNPLLYS). Residues 137-157 (TKMSKQVCIQLLVGSYIGGFI) form a helical membrane-spanning segment. At 158–199 (HASFFTLSFVSFLFCGPNRINHFFCDFTPLVELSCSDNSVLI) the chain is on the extracellular side. Residues 200–220 (ILDSFSTGTIIVITVFVIAIS) form a helical membrane-spanning segment. Residues 221 to 240 (YTCILITILKMHSTEGRHKA) lie on the Cytoplasmic side of the membrane. Residues 241 to 261 (FSTCTSHLTVVTLLYGTVTFI) form a helical membrane-spanning segment. Residues 262–274 (YVMPKSSYSTDQN) are Extracellular-facing. A helical membrane pass occupies residues 275-295 (KVISVFYMVVIPMLNPIIYSL). Topologically, residues 296–314 (RNNEIKGALKKQLGEKNIF) are cytoplasmic.

This sequence belongs to the G-protein coupled receptor 1 family.

Its subcellular location is the cell membrane. In terms of biological role, potential odorant receptor. The protein is Olfactory receptor 5P81 of Mus musculus (Mouse).